A 180-amino-acid chain; its full sequence is Translation initiation factor IF-3 (180 aa).

It belongs to the IF-3 family. In terms of assembly, monomer.

The protein resides in the cytoplasm. In terms of biological role, IF-3 binds to the 30S ribosomal subunit and shifts the equilibrium between 70S ribosomes and their 50S and 30S subunits in favor of the free subunits, thus enhancing the availability of 30S subunits on which protein synthesis initiation begins. In Xylella fastidiosa (strain 9a5c), this protein is Translation initiation factor IF-3.